A 346-amino-acid polypeptide reads, in one-letter code: MVSARPAFISGGPSTGGWRPTRQAAERTGGPEHSIEEVAGRGAPGHRSAEGWLRGKTLAPQRKREAIRRMLEHTPLSERRACRLAGLSRDAFRHAPVPTPATQALSARLVELAQTHRRFGYRRLHDLLRPEFPSVNHKKIYRLYEEAELKVRKRRKAKRPVGERQKLLASSMPNDTWSMDFVFDALANARRIKCLTVVDDFTRESVDIAVDHGISGAYVVRLLDQAACFRGYPRAVRTDNGPEFTSRAFIAWTQQHGIEHILIEPGAPTQNAYIESFNGKFRDECLNEHWFTSLAQARDVIADWRRHYNQIRPHSSCGRIPPAQFAANYRTQQANNAVPFNPGLYQ.

The tract at residues 1-50 (MVSARPAFISGGPSTGGWRPTRQAAERTGGPEHSIEEVAGRGAPGHRSAE) is disordered. A compositionally biased stretch (basic and acidic residues) spans 29 to 39 (GGPEHSIEEVA). Residues 169 to 329 (ASSMPNDTWS…IPPAQFAANY (161 aa)) enclose the Integrase catalytic domain.

The polypeptide is Insertion element IS476 uncharacterized 39.2 kDa protein (Xanthomonas euvesicatoria).